The sequence spans 239 residues: Orotidine 5'-phosphate decarboxylase (239 aa).

Substrate is bound by residues Asp10, Lys33, 60–69 (DLKLYDIPNT), Thr124, Arg186, Gln195, Gly215, and Arg216. Residue Lys62 is the Proton donor of the active site.

Belongs to the OMP decarboxylase family. Type 1 subfamily. Homodimer.

It catalyses the reaction orotidine 5'-phosphate + H(+) = UMP + CO2. It participates in pyrimidine metabolism; UMP biosynthesis via de novo pathway; UMP from orotate: step 2/2. Functionally, catalyzes the decarboxylation of orotidine 5'-monophosphate (OMP) to uridine 5'-monophosphate (UMP). This is Orotidine 5'-phosphate decarboxylase from Latilactobacillus sakei subsp. sakei (strain 23K) (Lactobacillus sakei subsp. sakei).